We begin with the raw amino-acid sequence, 304 residues long: Elongation factor Ts (304 aa).

Positions 79–82 (TDFV) are involved in Mg(2+) ion dislocation from EF-Tu.

It belongs to the EF-Ts family.

It is found in the cytoplasm. Its function is as follows. Associates with the EF-Tu.GDP complex and induces the exchange of GDP to GTP. It remains bound to the aminoacyl-tRNA.EF-Tu.GTP complex up to the GTP hydrolysis stage on the ribosome. The polypeptide is Elongation factor Ts (Polaromonas sp. (strain JS666 / ATCC BAA-500)).